Consider the following 711-residue polypeptide: RB-associated KRAB zinc finger protein (711 aa).

The 72-residue stretch at 8–79 folds into the KRAB domain; sequence LSFKDVAVAF…EGDRHAQRHL (72 aa). Glycyl lysine isopeptide (Lys-Gly) (interchain with G-Cter in SUMO2) cross-links involve residues K97 and K256. The tract at residues 170–257 is required for interaction with RB1; it reads AYGESLEDFN…YPRSQMELKP (88 aa). C2H2-type zinc fingers lie at residues 258–280 and 286–308; these read FECT…QRAH and YACS…RRSH. K312 participates in a covalent cross-link: Glycyl lysine isopeptide (Lys-Gly) (interchain with G-Cter in SUMO2). 6 consecutive C2H2-type zinc fingers follow at residues 314 to 336, 342 to 364, 370 to 392, 398 to 420, 426 to 448, and 454 to 476; these read YKCN…QRTH, YECS…QRNH, YPCN…QRTH, YQCS…YRSH, and YECT…WKVH. K354 participates in a covalent cross-link: Glycyl lysine isopeptide (Lys-Gly) (interchain with G-Cter in SUMO2). Residues 414–711 are interaction with AR; sequence ITHQRTHTGE…TVNVLTVEKL (298 aa). Residues 508–530 form a C2H2-type 9; degenerate zinc finger; it reads YECNECGKTFLDSSAFHRHQSVP. K534 participates in a covalent cross-link: Glycyl lysine isopeptide (Lys-Gly) (interchain with G-Cter in SUMO2). 6 C2H2-type zinc fingers span residues 536-558, 564-586, 592-614, 620-642, 648-670, and 676-698; these read YECN…YRGH, FGCS…QRVH, YECY…HRIH, YECS…YRSH, YECN…YRTH, and YECN…QRIH.

Belongs to the krueppel C2H2-type zinc-finger protein family. As to quaternary structure, interacts with AR. May also interact with other nuclear hormone receptors such as NR3C1/GR. Interacts with RB1.

It is found in the nucleus. Functionally, may repress E2F-dependent transcription. May promote AR-dependent transcription. This Mus musculus (Mouse) protein is RB-associated KRAB zinc finger protein (Rbak).